The chain runs to 158 residues: Transcriptional repressor NrdR (158 aa).

A zinc finger lies at 3–34; that stretch reads CPSCQNTDSRVLESRAADAGRSVRRRRECLHC. In terms of domain architecture, ATP-cone spans 49–139; sequence ITVLKRNGNR…VYRDFRGVND (91 aa).

This sequence belongs to the NrdR family. The cofactor is Zn(2+).

Functionally, negatively regulates transcription of bacterial ribonucleotide reductase nrd genes and operons by binding to NrdR-boxes. The polypeptide is Transcriptional repressor NrdR (Prochlorococcus marinus (strain MIT 9313)).